We begin with the raw amino-acid sequence, 205 residues long: N-(5'-phosphoribosyl)anthranilate isomerase (205 aa).

Belongs to the TrpF family.

It catalyses the reaction N-(5-phospho-beta-D-ribosyl)anthranilate = 1-(2-carboxyphenylamino)-1-deoxy-D-ribulose 5-phosphate. It participates in amino-acid biosynthesis; L-tryptophan biosynthesis; L-tryptophan from chorismate: step 3/5. This chain is N-(5'-phosphoribosyl)anthranilate isomerase, found in Trichlorobacter lovleyi (strain ATCC BAA-1151 / DSM 17278 / SZ) (Geobacter lovleyi).